A 140-amino-acid polypeptide reads, in one-letter code: Short-chain diamines transporter (140 aa).

The next 4 membrane-spanning stretches (helical) occupy residues 7-27 (IFHA…AAAL), 36-56 (LALV…IYNL), 79-99 (VGFE…FLEI), and 105-125 (LMLE…FNWL).

This sequence belongs to the proteobacterial antimicrobial compound efflux (PACE) (TC 2.A.117) family.

The protein resides in the cell inner membrane. In terms of biological role, mediates the efflux of short-chain diamines when energized by an electrochemical gradient. Confers resistance to chlorhexidine, benzalkonium, proflavine and acriflavine. Mediates efflux of both proflavine and acriflavine via an energy-dependent mechanism. The protein is Short-chain diamines transporter of Vibrio parahaemolyticus serotype O3:K6 (strain RIMD 2210633).